A 269-amino-acid chain; its full sequence is Troponin T, fast skeletal muscle (269 aa).

Over residues methionine 1–alanine 23 the composition is skewed to acidic residues. The interval methionine 1–lysine 72 is disordered. Serine 2 is subject to N-acetylserine. Serine 2 carries the post-translational modification Phosphoserine. Over residues alanine 24–glutamate 34 the composition is skewed to basic and acidic residues. Acidic residues predominate over residues glutamate 35–glutamate 47. The span at proline 60 to lysine 72 shows a compositional bias: basic and acidic residues. Serine 88 bears the Phosphoserine mark. The span at arginine 111 to lysine 153 shows a compositional bias: basic and acidic residues. Positions arginine 111–leucine 158 are disordered. Phosphoserine is present on residues serine 159, serine 166, and serine 167. The disordered stretch occupies residues arginine 245–lysine 269.

It belongs to the troponin T family. As to expression, in fetal and adult fast skeletal muscles, with a higher level expression in fetal than in adult muscle.

In terms of biological role, troponin T is the tropomyosin-binding subunit of troponin, the thin filament regulatory complex which confers calcium-sensitivity to striated muscle actomyosin ATPase activity. The protein is Troponin T, fast skeletal muscle (TNNT3) of Homo sapiens (Human).